Reading from the N-terminus, the 277-residue chain is Sulfur carrier protein FdhD (277 aa).

The active-site Cysteine persulfide intermediate is the Cys121. Phe260–Arg265 provides a ligand contact to Mo-bis(molybdopterin guanine dinucleotide).

Belongs to the FdhD family.

The protein localises to the cytoplasm. Its function is as follows. Required for formate dehydrogenase (FDH) activity. Acts as a sulfur carrier protein that transfers sulfur from IscS to the molybdenum cofactor prior to its insertion into FDH. The chain is Sulfur carrier protein FdhD from Shigella flexneri serotype 5b (strain 8401).